A 511-amino-acid chain; its full sequence is MALRAMRGIVNGAAPELPVPTGGPMAGAREQALAVSRNYLSQPRLTYKTVSGVNGPLVILDHVKFPRYAEIVHLTLPDGTKRSGQVLEVSGSKAVVQVFEGTSGIDAKKTSCEFTGDILRTPVSEDMLGRVFNGSGKPIDRGPVVLAEDFLDIMGQPINPQCRIYPEEMIQTGISAIDGMNSIARGQKIPIFSAAGLPHNEIAAQICRQAGLVKKSKDVVDYSEENFAIVFAAMGVNMETARFFKSDFEENGSMDNVCLFLNLANDPTIERIITPRLALTTAEFLAYQCEKHVLVILTDMSSYAEALREVSAAREEVPGRRGFPGYMYTDLATIYERAGRVEGRNGSITQIPILTMPNDDITHPIPDLTGYITEGQIYVDRQLHNRQIYPPINVLPSLSRLMKSAIGEGMTRKDHADVSNQLYACYAIGKDVQAMKAVVGEEALTSDDLLYLEFLQKFEKNFITQGPYENRTVYETLDIGWQLLRIFPKEMLKRIPQSTLSEFYPRDSAKH.

R400 is a binding site for ATP.

Belongs to the ATPase alpha/beta chains family. In terms of assembly, V-ATPase is a heteromultimeric enzyme made up of two complexes: the ATP-hydrolytic V1 complex and the proton translocation V0 complex. The V1 complex consists of three catalytic AB heterodimers that form a heterohexamer, three peripheral stalks each consisting of EG heterodimers, one central rotor including subunits D and F, and the regulatory subunits C and H. The proton translocation complex V0 consists of the proton transport subunit a, a ring of proteolipid subunits c9c'', rotary subunit d, subunits e and f, and the accessory subunits ATP6AP1/Ac45 and ATP6AP2/PRR. As to expression, kidney; found in early distal nephron, encompassing thick ascending limbs and distal convoluted tubules and in the alpha-intercalated cells of the cortical collecting ducts (at protein level). Expressed in epididymal clear cells (at protein level). Mainly expressed in the organ of Corti and spiral ganglion neurons, in both the early postnatal cochlea (P2) and the adult cochlea (P30).

Its subcellular location is the apical cell membrane. It is found in the melanosome. The protein resides in the cytoplasm. It localises to the cytoplasmic vesicle. The protein localises to the secretory vesicle. Its subcellular location is the synaptic vesicle membrane. It is found in the clathrin-coated vesicle membrane. Its function is as follows. Non-catalytic subunit of the V1 complex of vacuolar(H+)-ATPase (V-ATPase), a multisubunit enzyme composed of a peripheral complex (V1) that hydrolyzes ATP and a membrane integral complex (V0) that translocates protons. V-ATPase is responsible for acidifying and maintaining the pH of intracellular compartments and in some cell types, is targeted to the plasma membrane, where it is responsible for acidifying the extracellular environment. In renal intercalated cells, can partially compensate the lack of ATP6V1B1 and mediate secretion of protons (H+) into the urine under base-line conditions but not in conditions of acid load. The chain is V-type proton ATPase subunit B, brain isoform (Atp6v1b2) from Mus musculus (Mouse).